We begin with the raw amino-acid sequence, 511 residues long: ATP synthase subunit alpha (511 aa).

169–176 is an ATP binding site; that stretch reads GDRQTGKT.

Belongs to the ATPase alpha/beta chains family. F-type ATPases have 2 components, CF(1) - the catalytic core - and CF(0) - the membrane proton channel. CF(1) has five subunits: alpha(3), beta(3), gamma(1), delta(1), epsilon(1). CF(0) has three main subunits: a(1), b(2) and c(9-12). The alpha and beta chains form an alternating ring which encloses part of the gamma chain. CF(1) is attached to CF(0) by a central stalk formed by the gamma and epsilon chains, while a peripheral stalk is formed by the delta and b chains.

It localises to the cell inner membrane. It catalyses the reaction ATP + H2O + 4 H(+)(in) = ADP + phosphate + 5 H(+)(out). Functionally, produces ATP from ADP in the presence of a proton gradient across the membrane. The alpha chain is a regulatory subunit. This chain is ATP synthase subunit alpha, found in Bartonella quintana (strain Toulouse) (Rochalimaea quintana).